Consider the following 331-residue polypeptide: Neuropeptides B/W receptor type 1 (331 aa).

Over 1-43 the chain is Extracellular; it reads MHNASYWGPERANTSCPAPAPTLGCPNASGPAPPLPPPLAVAV. N-linked (GlcNAc...) asparagine glycosylation is found at Asn-3, Asn-13, and Asn-27. The chain crosses the membrane as a helical span at residues 44–66; it reads PVVYAVICAVGLAGNSAVLFVLL. The Cytoplasmic segment spans residues 67–75; sequence RAPRRKTVT. A helical transmembrane segment spans residues 76 to 100; it reads NLFILNLAVADELFTLVPPVNIADF. Residues 101-115 are Extracellular-facing; the sequence is LLRRWPFGELLCKLV. Cys-112 and Cys-191 form a disulfide bridge. The helical transmembrane segment at 116–135 threads the bilayer; that stretch reads VAVDQYNTFSSLYFLTVMSA. At 136–160 the chain is on the cytoplasmic side; it reads DRYLVVLATAESRRVAGRTYGAARA. A helical transmembrane segment spans residues 161-180; the sequence is VSLAVWGVATLVVLPFAVFA. At 181–205 the chain is on the extracellular side; the sequence is RLDEEQGRRQCVLVFPQPEALWWRA. The helical transmembrane segment at 206 to 227 threads the bilayer; sequence SRLYTLVLGFAIPVSTICVLYT. The Cytoplasmic segment spans residues 228–251; that stretch reads SLLCRLRAIRLDSHAKALDRAKKR. Residues 252-276 traverse the membrane as a helical segment; sequence VTVLVVAILAVCLLVWTPYHLSTVV. The Extracellular segment spans residues 277-286; that stretch reads ALTTDLPQTP. The chain crosses the membrane as a helical span at residues 287–301; that stretch reads LVIAVSYFITSLSYA. Over 302-331 the chain is Cytoplasmic; that stretch reads NSCLNPFLYAFLDDSFRRSLRQLLACRTTS.

It belongs to the G-protein coupled receptor 1 family.

It is found in the cell membrane. Its function is as follows. Interacts specifically with a number of opioid ligands. Receptor for neuropeptides B and W, which may be involved in neuroendocrine system regulation, food intake and the organization of other signals. The polypeptide is Neuropeptides B/W receptor type 1 (NPBWR1) (Bos taurus (Bovine)).